The chain runs to 543 residues: Putative cysteine ligase BshC (543 aa).

Residues 419–440 adopt a coiled-coil conformation; sequence DEKNNDNIDEVVEEVKAQISDI.

Belongs to the BshC family.

Its function is as follows. Involved in bacillithiol (BSH) biosynthesis. May catalyze the last step of the pathway, the addition of cysteine to glucosamine malate (GlcN-Mal) to generate BSH. The sequence is that of Putative cysteine ligase BshC from Oceanobacillus iheyensis (strain DSM 14371 / CIP 107618 / JCM 11309 / KCTC 3954 / HTE831).